The chain runs to 434 residues: Nicotinate phosphoribosyltransferase (434 aa).

H242 is subject to Phosphohistidine; by autocatalysis.

The protein belongs to the NAPRTase family. Transiently phosphorylated on a His residue during the reaction cycle. Phosphorylation strongly increases the affinity for substrates and increases the rate of nicotinate D-ribonucleotide production. Dephosphorylation regenerates the low-affinity form of the enzyme, leading to product release.

It catalyses the reaction nicotinate + 5-phospho-alpha-D-ribose 1-diphosphate + ATP + H2O = nicotinate beta-D-ribonucleotide + ADP + phosphate + diphosphate. Its pathway is cofactor biosynthesis; NAD(+) biosynthesis; nicotinate D-ribonucleotide from nicotinate: step 1/1. In terms of biological role, catalyzes the synthesis of beta-nicotinate D-ribonucleotide from nicotinate and 5-phospho-D-ribose 1-phosphate at the expense of ATP. The chain is Nicotinate phosphoribosyltransferase from Rhizobium etli (strain ATCC 51251 / DSM 11541 / JCM 21823 / NBRC 15573 / CFN 42).